A 1709-amino-acid chain; its full sequence is Sialoadhesin (1709 aa).

The first 19 residues, 1–19 (MGFLPKLLLLASFFPAGQA), serve as a signal peptide directing secretion. The Ig-like V-type domain maps to 20–136 (SWGVSSPQDV…DVKGTLVTVT (117 aa)). Topologically, residues 20 to 1641 (SWGVSSPQDV…ALHRLHQFQQ (1622 aa)) are extracellular. 4 cysteine pairs are disulfide-bonded: Cys-36-Cys-166, Cys-41-Cys-98, Cys-160-Cys-217, and Cys-262-Cys-305. N-acetylneuraminate contacts are provided by residues Tyr-63, Arg-116, and 122-126 (VNRWS). 12 consecutive Ig-like C2-type domains span residues 139–233 (PRVP…IHLQ), 238–320 (PKGV…PPIS), 326–405 (AEVQ…GPVS), 411–507 (PPLT…LDFH), 511–593 (ARLL…AVLT), 601–705 (PTFT…ATFN), 708–785 (ATVL…AQLS), 799–894 (PKLS…FQVR), 898–977 (VQVS…APIS), 984–1083 (PRHV…ADFD), 1085–1165 (QAVN…RPIT), and 1176–1248 (RLTY…SPLG). Asn-159 is a glycosylation site (N-linked (GlcNAc...) asparagine). Asn-265 and Asn-339 each carry an N-linked (GlcNAc...) asparagine glycan. 2 disulfides stabilise this stretch: Cys-346–Cys-390 and Cys-433–Cys-491. Asn-499 carries N-linked (GlcNAc...) asparagine glycosylation. 2 disulfides stabilise this stretch: Cys-531–Cys-575 and Cys-624–Cys-689. Asn-697, Asn-726, Asn-730, and Asn-741 each carry an N-linked (GlcNAc...) asparagine glycan. Disulfide bonds link Cys-729/Cys-774 and Cys-817/Cys-876. An N-linked (GlcNAc...) asparagine glycan is attached at Asn-886. 2 cysteine pairs are disulfide-bonded: Cys-916–Cys-960 and Cys-1005–Cys-1067. Asn-1104 and Asn-1138 each carry an N-linked (GlcNAc...) asparagine glycan. 2 disulfide bridges follow: Cys-1107–Cys-1149 and Cys-1193–Cys-1241. Asn-1251 carries N-linked (GlcNAc...) asparagine glycosylation. Ig-like C2-type domains lie at 1259 to 1341 (EGVR…AALQ), 1350 to 1442 (VLSS…RLQV), 1445 to 1528 (ARVV…VMLR), and 1536 to 1631 (PTMM…FGVR). 2 cysteine pairs are disulfide-bonded: Cys-1281-Cys-1324 and Cys-1367-Cys-1425. N-linked (GlcNAc...) asparagine glycosylation is found at Asn-1462 and Asn-1476. 2 cysteine pairs are disulfide-bonded: Cys-1465–Cys-1511 and Cys-1554–Cys-1613. Residues 1642 to 1662 (LLWVLGLLVGLLLLLLGLGAC) traverse the membrane as a helical segment. Residues 1663–1709 (YTWRRRRVCKQSMGENSVEMAFQKETTQLIDPDAATCETSTCAPPLG) are Cytoplasmic-facing.

This sequence belongs to the immunoglobulin superfamily. SIGLEC (sialic acid binding Ig-like lectin) family. Interacts with TYROBP. Interacts with CLEC10A. As to expression, expressed by macrophages in various tissues. High levels are found in spleen, lymph node, perivascular macrophages in brain and lower levels in bone marrow, liver Kupffer cells and lamina propria of colon and lung. Also expressed by inflammatory macrophages in rheumatoid arthritis.

The protein resides in the cell membrane. The protein localises to the secreted. Its function is as follows. Macrophage-restricted adhesion molecule that mediates sialic-acid dependent binding to lymphocytes, including granulocytes, monocytes, natural killer cells, B-cells and CD8 T-cells. Plays a crucial role in limiting bacterial dissemination by engaging sialylated bacteria to promote effective phagocytosis and antigen presentation for the adaptive immune response. Mediates the uptake of various enveloped viruses via sialic acid recognition and subsequently induces the formation of intracellular compartments filled with virions (VCCs). In turn, enhances macrophage-to-T-cell transmission of several viruses including HIV-1 or SARS-CoV-2. Acts as an endocytic receptor mediating clathrin dependent endocytosis. Preferentially binds to alpha-2,3-linked sialic acid. Binds to SPN/CD43 on T-cells. May play a role in hemopoiesis. Plays a role in the inhibition of antiviral innate immune by promoting TBK1 degradation via TYROBP and TRIM27-mediated ubiquitination. Functionally, (Microbial infection) Facilitates viral cytoplasmic entry into activated dendritic cells via recognition of sialylated gangliosides pesent on viral membrane. This chain is Sialoadhesin (SIGLEC1), found in Homo sapiens (Human).